Reading from the N-terminus, the 473-residue chain is FAD-dependent oxidoreductase dpchF (473 aa).

An N-terminal signal peptide occupies residues 1–21; sequence MKLSFIASPVWALALAQFAAA. Residues Asn98, Asn128, Asn181, Asn262, and Asn330 are each glycosylated (N-linked (GlcNAc...) asparagine).

Belongs to the beta-cyclopiazonate dehydrogenase family. FAD is required as a cofactor.

It functions in the pathway secondary metabolite biosynthesis; terpenoid biosynthesis. Its function is as follows. FAD-dependent oxidoreductase; part of the gene cluster that mediates the biosynthesis of the diterpenoid pyrones higginsianins A and B. The first step of the pathway is the synthesis of the alpha-pyrone moiety by the polyketide synthase dpchA via condensation of one acetyl-CoA starter unit with 3 malonyl-CoA units and 2 methylations. The alpha-pyrone is then combined with geranylgeranyl pyrophosphate (GGPP) formed by the GGPP synthase dpchD through the action of the prenyltransferase dpchC to yield a linear alpha-pyrone diterpenoid. Subsequent steps in the diterpenoid pyrone biosynthetic pathway involve the decalin core formation, which is initiated by the epoxidation of the C10-C11 olefin by the FAD-dependent oxidoreductase dpchE, and is followed by a cyclization cascade catalyzed by the terpene cyclase dpchB. The short chain dehydrogenase/reductase dpchG then oxidizes the 8S hydroxy group to a ketone and the short chain dehydrogenase/reductase dpchH reduces the ketone to the 8R hydroxy group to yield higginsianin B. Finally, the FAD-dependent oxidoreductase dpchF converts higginsianin B into higginsianin A. The protein is FAD-dependent oxidoreductase dpchF of Colletotrichum higginsianum (strain IMI 349063) (Crucifer anthracnose fungus).